The chain runs to 482 residues: BTB/POZ domain-containing protein 6-B (482 aa).

One can recognise a BTB domain in the interval 80–150 (ADVHFVVGPP…MYSDEIELEA (71 aa)).

In terms of assembly, interacts with cul3. Interacts (via BTB domain) with zbtb16/plzf. In embryos, expressed in the cranial ganglia.

The protein localises to the cytoplasm. It localises to the nucleus. Adapter protein for the cul3 E3 ubiquitin-protein ligase complex. Promotes the export of zbtb16/plzf from the nucleus to the cytoplasm and targets zbtb16/plzf for ubiquitination and degradation. Up-regulates neurog1 expression and antagonizes zbtb16/plzf, to promote neurogenesis. This chain is BTB/POZ domain-containing protein 6-B (btbd6b), found in Danio rerio (Zebrafish).